A 525-amino-acid polypeptide reads, in one-letter code: GMP synthase [glutamine-hydrolyzing] (525 aa).

The Glutamine amidotransferase type-1 domain occupies 9–207 (RILILDFGSQ…VRDICQCEAL (199 aa)). Catalysis depends on cysteine 86, which acts as the Nucleophile. Residues histidine 181 and glutamate 183 contribute to the active site. A GMPS ATP-PPase domain is found at 208–400 (WTPAKIIDDA…LGLPYDMLYR (193 aa)). Position 235–241 (235–241 (SGGVDSS)) interacts with ATP.

In terms of assembly, homodimer.

It carries out the reaction XMP + L-glutamine + ATP + H2O = GMP + L-glutamate + AMP + diphosphate + 2 H(+). Its pathway is purine metabolism; GMP biosynthesis; GMP from XMP (L-Gln route): step 1/1. Its function is as follows. Catalyzes the synthesis of GMP from XMP. The polypeptide is GMP synthase [glutamine-hydrolyzing] (Shigella sonnei (strain Ss046)).